The sequence spans 1209 residues: Nitric oxide synthase (1209 aa).

Residue S103 coordinates (6R)-L-erythro-5,6,7,8-tetrahydrobiopterin. C181 is a binding site for heme b. 5 residues coordinate L-arginine: Q244, W353, Y354, E358, and N363. Residues W444 and F457 each contribute to the (6R)-L-erythro-5,6,7,8-tetrahydrobiopterin site. Residue Y472 coordinates heme b. The calmodulin-binding stretch occupies residues 491 to 511 (VHRKFHFKQIARAVKFTSKLF). The 203-residue stretch at 521–723 (ATILYATETG…QFRAWSSKIF (203 aa)) folds into the Flavodoxin-like domain. Residue 527–531 (TETGK) participates in FMN binding. Residues 603–622 (RGDGTSDLGSGTFKTPTPKS) form a disordered region. 669–700 (VFGLGSSAYPKFCHFGKTVDKILGDLGGERIL) is an FMN binding site. Residues 776–1021 (KQLITCKVKE…IRRAPSFHMP (246 aa)) form the FAD-binding FR-type domain. FAD contacts are provided by residues 811-822 (YDPGDHVGVLAC) and 954-964 (LQPRFYSISSS). Residues 1028–1147 (LILV…QQKL) and 1128–1143 (NGHFYVCGDCKMAEEV) contribute to the NADP(+) site.

This sequence belongs to the NOS family. The cofactor is heme b. FAD serves as cofactor. FMN is required as a cofactor. In terms of tissue distribution, constitutively expressed at a low level in the larval fat body, hemocyte, Malpighian tubule, midgut, silk gland and adult antenna.

The enzyme catalyses 2 L-arginine + 3 NADPH + 4 O2 + H(+) = 2 L-citrulline + 2 nitric oxide + 3 NADP(+) + 4 H2O. With respect to regulation, expression is dependent on and stimulated by NADPH, calcium, BH4 and calmodulin. The activity is not dependent on FAD and is not stimulated by its presence. Functionally, produces nitric oxide (NO) which is a messenger molecule with diverse functions throughout the body. Involved in the induction of immune gene expression. In Bombyx mori (Silk moth), this protein is Nitric oxide synthase.